The chain runs to 798 residues: Phenylalanine--tRNA ligase beta subunit (798 aa).

One can recognise a tRNA-binding domain in the interval 38–148 (IGNYEKVVVG…PEAPVGEKIE (111 aa)). The region spanning 400–475 (FTPKVIAVSL…RYLGYNNFPD (76 aa)) is the B5 domain. Residues Asp453, Asp459, Glu462, and Glu463 each coordinate Mg(2+). The FDX-ACB domain maps to 703–796 (SPYPEVKRDI…LEAKTGAKLR (94 aa)).

It belongs to the phenylalanyl-tRNA synthetase beta subunit family. Type 1 subfamily. In terms of assembly, tetramer of two alpha and two beta subunits. Mg(2+) serves as cofactor.

It is found in the cytoplasm. It catalyses the reaction tRNA(Phe) + L-phenylalanine + ATP = L-phenylalanyl-tRNA(Phe) + AMP + diphosphate + H(+). The chain is Phenylalanine--tRNA ligase beta subunit from Carboxydothermus hydrogenoformans (strain ATCC BAA-161 / DSM 6008 / Z-2901).